Reading from the N-terminus, the 159-residue chain is Ribosome maturation factor RimP (159 aa).

This sequence belongs to the RimP family.

It is found in the cytoplasm. In terms of biological role, required for maturation of 30S ribosomal subunits. This is Ribosome maturation factor RimP from Halothermothrix orenii (strain H 168 / OCM 544 / DSM 9562).